We begin with the raw amino-acid sequence, 1220 residues long: Pesticidal crystal protein Cry5Ac (1220 aa).

The interval 1194 to 1220 (PLPTDDQNSEGNTAFSTNSDTSMNNNQ) is disordered. The segment covering 1198–1220 (DDQNSEGNTAFSTNSDTSMNNNQ) has biased composition (polar residues).

Belongs to the delta endotoxin family.

Its function is as follows. Promotes colloidosmotic lysis by binding to the midgut epithelial cells of hymenopteran species. In Bacillus thuringiensis, this protein is Pesticidal crystal protein Cry5Ac (cry5Ac).